We begin with the raw amino-acid sequence, 90 residues long: Large ribosomal subunit protein bL27 (90 aa).

The segment at 1–21 is disordered; the sequence is MAHKKAGGSSRNGRDSHGKRL.

This sequence belongs to the bacterial ribosomal protein bL27 family.

The protein is Large ribosomal subunit protein bL27 of Nitrobacter winogradskyi (strain ATCC 25391 / DSM 10237 / CIP 104748 / NCIMB 11846 / Nb-255).